Reading from the N-terminus, the 370-residue chain is Glucan endo-1,3-beta-glucosidase (370 aa).

The signal sequence occupies residues 1–32; sequence MASFFARTRRFSLVSLFLLELFTINLIPTTDA. Pyrrolidone carboxylic acid is present on Q33. E127 serves as the catalytic Proton donor. E272 acts as the Nucleophile in catalysis. A propeptide spans 348-370 (removed in mature form); the sequence is GERRDGEIVEGDFNGTVSLKSDM. The N-linked (GlcNAc...) asparagine glycan is linked to N361.

The protein belongs to the glycosyl hydrolase 17 family. As to expression, constitutively expressed in seedling roots.

It catalyses the reaction Hydrolysis of (1-&gt;3)-beta-D-glucosidic linkages in (1-&gt;3)-beta-D-glucans.. Implicated in the defense of plants against pathogens. The sequence is that of Glucan endo-1,3-beta-glucosidase from Pisum sativum (Garden pea).